A 209-amino-acid chain; its full sequence is Kynurenine formamidase (209 aa).

Trp19 provides a ligand contact to substrate. Zn(2+) contacts are provided by His49, His53, and Asp55. The active-site Proton donor/acceptor is the His59. Positions 160 and 172 each coordinate Zn(2+).

This sequence belongs to the Cyclase 1 superfamily. KynB family. In terms of assembly, homodimer. Zn(2+) serves as cofactor.

The enzyme catalyses N-formyl-L-kynurenine + H2O = L-kynurenine + formate + H(+). It functions in the pathway amino-acid degradation; L-tryptophan degradation via kynurenine pathway; L-kynurenine from L-tryptophan: step 2/2. Catalyzes the hydrolysis of N-formyl-L-kynurenine to L-kynurenine, the second step in the kynurenine pathway of tryptophan degradation. This chain is Kynurenine formamidase, found in Geobacillus thermodenitrificans (strain NG80-2).